The chain runs to 126 residues: Small ribosomal subunit protein bS6 (126 aa).

A disordered region spans residues 101–126; the sequence is VMMKAKEERSAKREDAAPRAEEAAAE. Residues 104-126 show a composition bias toward basic and acidic residues; that stretch reads KAKEERSAKREDAAPRAEEAAAE.

Belongs to the bacterial ribosomal protein bS6 family.

Binds together with bS18 to 16S ribosomal RNA. The protein is Small ribosomal subunit protein bS6 of Aliivibrio fischeri (strain ATCC 700601 / ES114) (Vibrio fischeri).